We begin with the raw amino-acid sequence, 121 residues long: Small ribosomal subunit protein bS6 (121 aa).

Belongs to the bacterial ribosomal protein bS6 family.

In terms of biological role, binds together with bS18 to 16S ribosomal RNA. The chain is Small ribosomal subunit protein bS6 (rpsF) from Rickettsia prowazekii (strain Madrid E).